The sequence spans 357 residues: Protein pelota homolog (357 aa).

It belongs to the eukaryotic release factor 1 family. Pelota subfamily. As to quaternary structure, monomer. It depends on a divalent metal cation as a cofactor.

Its subcellular location is the cytoplasm. Its function is as follows. May function in recognizing stalled ribosomes, interact with stem-loop structures in stalled mRNA molecules, and effect endonucleolytic cleavage of the mRNA. May play a role in the release non-functional ribosomes and degradation of damaged mRNAs. Has endoribonuclease activity. The protein is Protein pelota homolog of Halobacterium salinarum (strain ATCC 29341 / DSM 671 / R1).